Consider the following 176-residue polypeptide: Trypsin inhibitor 1B (176 aa).

Intrachain disulfides connect Cys39-Cys83 and Cys132-Cys143.

The protein belongs to the protease inhibitor I3 (leguminous Kunitz-type inhibitor) family.

Inhibits trypsin stoichiometrically. This chain is Trypsin inhibitor 1B, found in Erythrina variegata (Indian coral tree).